The following is a 296-amino-acid chain: Formamidopyrimidine-DNA glycosylase (296 aa).

P2 acts as the Schiff-base intermediate with DNA in catalysis. E3 functions as the Proton donor in the catalytic mechanism. The active-site Proton donor; for beta-elimination activity is the K61. Positions 104, 123, and 169 each coordinate DNA. The FPG-type zinc-finger motif lies at 255–289 (DAYGREGEPCRRCGAIMRREKFMNRSSFYCPRCQP). Residue R279 is the Proton donor; for delta-elimination activity of the active site.

Belongs to the FPG family. As to quaternary structure, monomer. Zn(2+) is required as a cofactor.

The catalysed reaction is Hydrolysis of DNA containing ring-opened 7-methylguanine residues, releasing 2,6-diamino-4-hydroxy-5-(N-methyl)formamidopyrimidine.. It carries out the reaction 2'-deoxyribonucleotide-(2'-deoxyribose 5'-phosphate)-2'-deoxyribonucleotide-DNA = a 3'-end 2'-deoxyribonucleotide-(2,3-dehydro-2,3-deoxyribose 5'-phosphate)-DNA + a 5'-end 5'-phospho-2'-deoxyribonucleoside-DNA + H(+). In terms of biological role, involved in base excision repair of DNA damaged by oxidation or by mutagenic agents. Acts as a DNA glycosylase that recognizes and removes damaged bases. Has a preference for oxidized purines, such as 7,8-dihydro-8-oxoguanine (8-oxoG). Has AP (apurinic/apyrimidinic) lyase activity and introduces nicks in the DNA strand. Cleaves the DNA backbone by beta-delta elimination to generate a single-strand break at the site of the removed base with both 3'- and 5'-phosphates. This Mycobacterium sp. (strain JLS) protein is Formamidopyrimidine-DNA glycosylase.